The following is a 160-amino-acid chain: MAPK regulated corepressor interacting protein 2 (160 aa).

An N-acetylmethionine modification is found at Met-1. The interval 1 to 64 (MYTITKGPSK…GPWPLSSPGP (64 aa)) is disordered. Arg-35 carries the post-translational modification Omega-N-methylarginine. A compositionally biased stretch (pro residues) spans 37 to 61 (PAPPTSQPPRAQPFAQPPGPWPLSS). A Phosphoserine modification is found at Ser-61. Arg-65 carries the post-translational modification Omega-N-methylarginine. Ser-82 bears the Phosphoserine mark.

It belongs to the MCRIP family. In terms of assembly, interacts with DDX6. Interacts with MCRIP1.

The protein resides in the cytoplasm. It localises to the stress granule. Its subcellular location is the nucleus. In Homo sapiens (Human), this protein is MAPK regulated corepressor interacting protein 2 (MCRIP2).